The following is a 157-amino-acid chain: Mini-ribonuclease 3 (157 aa).

The active site involves aspartate 18. Positions 126-157 (EEDEGKGKGETAKEEESITDALSPAEQSEIDC) are disordered. The span at 130–141 (GKGKGETAKEEE) shows a compositional bias: basic and acidic residues.

This sequence belongs to the MrnC RNase family. As to quaternary structure, homodimer. Requires Mg(2+) as cofactor.

The protein localises to the cytoplasm. Functionally, involved in correct processing of both the 5' and 3' ends of 23S rRNA precursor. Processes 30S rRNA precursor transcript even in absence of ribonuclease 3 (Rnc); Rnc processes 30S rRNA into smaller rRNA precursors. The polypeptide is Mini-ribonuclease 3 (Desulfitobacterium hafniense (strain Y51)).